Here is a 52-residue protein sequence, read N- to C-terminus: uncharacterized protein (52 aa).

The tract at residues M1–F52 is disordered. Residues K7–P30 show a composition bias toward basic and acidic residues.

This is an uncharacterized protein from Dictyostelium discoideum (Social amoeba).